A 596-amino-acid polypeptide reads, in one-letter code: Transketolase-like protein 1 (596 aa).

H46 is a binding site for substrate. Residues S49 and 94 to 96 (GWL) each bind thiamine diphosphate. Mg(2+) is bound at residue D126. V127 and N156 together coordinate thiamine diphosphate. Positions 156 and 158 each coordinate Mg(2+). 2 residues coordinate thiamine diphosphate: K218 and H232. 3 residues coordinate substrate: H232, R292, and S319. 2 residues coordinate thiamine diphosphate: E340 and F366. Residue E340 is the Proton donor of the active site. Residues H390 and D398 each contribute to the substrate site. Q402 serves as a coordination point for thiamine diphosphate. R448 provides a ligand contact to substrate.

It belongs to the transketolase family. Homodimer. Mg(2+) serves as cofactor. The cofactor is Ca(2+). Requires Mn(2+) as cofactor. It depends on Co(2+) as a cofactor. Thiamine diphosphate is required as a cofactor.

Its subcellular location is the cytoplasm. It catalyses the reaction D-sedoheptulose 7-phosphate + D-glyceraldehyde 3-phosphate = aldehydo-D-ribose 5-phosphate + D-xylulose 5-phosphate. Catalyzes the transfer of a two-carbon ketol group from a ketose donor to an aldose acceptor, via a covalent intermediate with the cofactor thiamine pyrophosphate. In Bos taurus (Bovine), this protein is Transketolase-like protein 1 (TKTL1).